The sequence spans 556 residues: MSPTTAGIAFLASLVAAVVLVHVPLGDYMYRVYTSEKDSRAERLIYRVIGADPRAEQSWGSYARSVLAFSAVSIVFLFGLQLVQGRLPLHLHDPATPMTPALAWNTAVSFVTNTNWQAYAGESTQGHLVQMAGLAVQNFVSAAVGMAVAIALVRGFARRHTGELGNFWVDLVRGNLRILLPLAIVGALLLVAGGAIQNFALHEQVVTTLSGAAQTIPGGPVAGQEAIKELGTNGGGFFNVNSAHPFENPTPWTNWLENFLILLIPFSLPRTFGRMVGSARQGVAIAAIMGAIALASVSLTMLLQLQHHGTVPTAVGAAMEGVEQRFGVADSAVFAGSTTLTSTGAVNSFHDSYTSLGGLMTMFNMQLGEIGPGGVGSGLYGMLILAIITVFVAGLMVGRTPEYLGKKITPREIKLAASYFLATPLIVLTGSAIAMAMPGQRAGMLNTGPHGLSEVLYAFTSTANNNGSAFAGISVNTEWYNTALGLAMVFGRLLPIILVLALAGSLASQGVTPSSVGTLPTHRPQFVGMTVGVTLILVALTFLPILALGPLAEGIH.

The next 10 membrane-spanning stretches (helical) occupy residues 6–26 (AGIA…VPLG), 65–85 (SVLA…LVQG), 133–153 (GLAV…IALV), 176–196 (LRIL…GGAI), 249–269 (PTPW…FSLP), 283–303 (VAIA…TMLL), 378–398 (GLYG…LMVG), 415–435 (LAAS…AIAM), 483–503 (ALGL…LALA), and 526–546 (FVGM…LPIL).

The protein belongs to the KdpA family. The system is composed of three essential subunits: KdpA, KdpB and KdpC.

It localises to the cell membrane. Functionally, part of the high-affinity ATP-driven potassium transport (or Kdp) system, which catalyzes the hydrolysis of ATP coupled with the electrogenic transport of potassium into the cytoplasm. This subunit binds the extracellular potassium ions and delivers the ions to the membrane domain of KdpB through an intramembrane tunnel. In Mycolicibacterium smegmatis (strain ATCC 700084 / mc(2)155) (Mycobacterium smegmatis), this protein is Potassium-transporting ATPase potassium-binding subunit.